The chain runs to 207 residues: Ras-related protein Rab-7a (207 aa).

N-acetylthreonine is present on threonine 2. The GTP site is built by serine 17, glycine 18, valine 19, glycine 20, lysine 21, threonine 22, serine 23, serine 34, asparagine 35, tyrosine 37, and threonine 40. Threonine 22 serves as a coordination point for Mg(2+). The Switch 1 motif lies at 28–41; it reads YVNKKFSNQYKATI. Residues threonine 40 and aspartate 63 each coordinate Mg(2+). GTP is bound at residue glycine 66. The short motif at 67–82 is the Switch 2 element; the sequence is QERFQSLGVAFYRGAD. Serine 72 is subject to Phosphoserine. Asparagine 125, lysine 126, aspartate 128, alanine 156, and lysine 157 together coordinate GTP. Glycyl lysine isopeptide (Lys-Gly) (interchain with G-Cter in ubiquitin) cross-links involve residues lysine 191 and lysine 194. S-geranylgeranyl cysteine attachment occurs at residues cysteine 205 and cysteine 207. A Cysteine methyl ester modification is found at cysteine 207.

Belongs to the small GTPase superfamily. Rab family. In terms of assembly, interacts with NTRK1/TRKA, RILP, PSMA7, RNF115 and FYCO1. Interacts with the PIK3C3/VPS34-PIK3R4 complex. The GTP-bound form interacts with OSBPL1A and RAC1. Interacts with CLN3. Interacts with CHM, the substrate-binding subunit of the Rab geranylgeranyltransferase complex. Interacts with C9orf72. Does not interact with HPS4 and the BLOC-3 complex (heterodimer of HPS1 and HPS4). Interacts with CLN5. Interacts with PLEKHM1 (via N- and C-terminus). Interacts with PRPH; the interaction is direct. Interacts with VPS13A. The GDP-bound form interacts with RIMOC1. Interacts with the MON1A-CCZ1B complex and this interaction is enhanced in the presence of RIMOC1. Interacts with VPS39 and VPS41. Forms a ternary complex with LAMP2 and RUFY4; the interaction with LAMP2 is mediated by RUFY4 (via RUN and coiled coil domains). The cofactor is Mg(2+). Deubiquitination at Lys-191 and Lys-194 by USP32. In terms of processing, phosphorylated at Ser-72 by LRRK1; phosphorylation is dependent on protein kinase C (PKC) activation of LRRK1. Post-translationally, prenylated. Prenylation is required for association with cellular membranes. In terms of tissue distribution, widely expressed. High expression in liver, heart and kidney. Found in sensory and motor neurons.

The protein localises to the cytoplasmic vesicle. It localises to the phagosome membrane. The protein resides in the late endosome membrane. It is found in the lysosome membrane. Its subcellular location is the melanosome membrane. The protein localises to the autophagosome membrane. It localises to the lipid droplet. The protein resides in the endosome membrane. It is found in the mitochondrion membrane. It catalyses the reaction GTP + H2O = GDP + phosphate + H(+). Regulated by guanine nucleotide exchange factors (GEFs) which promote the exchange of bound GDP for free GTP. Regulated by GTPase activating proteins (GAPs) which increase the GTP hydrolysis activity. Inhibited by GDP dissociation inhibitors (GDIs). Its function is as follows. The small GTPases Rab are key regulators of intracellular membrane trafficking, from the formation of transport vesicles to their fusion with membranes. Rabs cycle between an inactive GDP-bound form and an active GTP-bound form that is able to recruit to membranes different sets of downstream effectors directly responsible for vesicle formation, movement, tethering and fusion. In its active state, RAB7A binds to a variety of effector proteins playing a key role in the regulation of endo-lysosomal trafficking. Governs early-to-late endosomal maturation, microtubule minus-end as well as plus-end directed endosomal migration and positioning, and endosome-lysosome transport through different protein-protein interaction cascades. Also plays a central role in growth-factor-mediated cell signaling, nutrient-transporter-mediated nutrient uptake, neurotrophin transport in the axons of neurons and lipid metabolism. Also involved in regulation of some specialized endosomal membrane trafficking, such as maturation of melanosomes, pathogen-induced phagosomes (or vacuoles) and autophagosomes. Plays a role in the maturation and acidification of phagosomes that engulf pathogens, such as S.aureus and Mycobacteria. Plays a role in the fusion of phagosomes with lysosomes. In concert with RAC1, plays a role in regulating the formation of RBs (ruffled borders) in osteoclasts. Controls the endosomal trafficking and neurite outgrowth signaling of NTRK1/TRKA. Regulates the endocytic trafficking of the EGF-EGFR complex by regulating its lysosomal degradation. Involved in the ADRB2-stimulated lipolysis through lipophagy, a cytosolic lipase-independent autophagic pathway. Required for the exosomal release of SDCBP, CD63 and syndecan. Required for vesicular trafficking and cell surface expression of ACE2. May play a role in PRPH neuronal intermediate filament assembly. This chain is Ras-related protein Rab-7a, found in Mus musculus (Mouse).